Consider the following 256-residue polypeptide: MALAKRIIPCLDVDNGRVVKGVKFENIRDAGDPVEIARRYDEQGADEITFLDITASVDGRDTTLHTVERMASQVFIPLTVGGGVRTVQDIRNLLNAGADKVSINTAAVFNPEFVGEAAQHFGSQCIVVAIDAKKVSGPGEAPRWEIFTHGGRKPTGLDAVEWAKKMEGLGAGEILLTSMDQDGMKNGFDLGVTRAISDALGIPVIASGGVGNLQHLADGIIEGHASAVLAASIFHFGEYTVPEAKAYMAQRGIVVR.

Residues aspartate 12 and aspartate 131 contribute to the active site.

This sequence belongs to the HisA/HisF family. Heterodimer of HisH and HisF.

The protein resides in the cytoplasm. It carries out the reaction 5-[(5-phospho-1-deoxy-D-ribulos-1-ylimino)methylamino]-1-(5-phospho-beta-D-ribosyl)imidazole-4-carboxamide + L-glutamine = D-erythro-1-(imidazol-4-yl)glycerol 3-phosphate + 5-amino-1-(5-phospho-beta-D-ribosyl)imidazole-4-carboxamide + L-glutamate + H(+). Its pathway is amino-acid biosynthesis; L-histidine biosynthesis; L-histidine from 5-phospho-alpha-D-ribose 1-diphosphate: step 5/9. In terms of biological role, IGPS catalyzes the conversion of PRFAR and glutamine to IGP, AICAR and glutamate. The HisF subunit catalyzes the cyclization activity that produces IGP and AICAR from PRFAR using the ammonia provided by the HisH subunit. The sequence is that of Imidazole glycerol phosphate synthase subunit HisF from Pseudomonas fluorescens (strain ATCC BAA-477 / NRRL B-23932 / Pf-5).